The sequence spans 483 residues: Regulatory protein ViaA (483 aa).

It belongs to the ViaA family. In terms of assembly, homodimer. Interacts with RavA.

Its subcellular location is the cytoplasm. Its function is as follows. Component of the RavA-ViaA chaperone complex, which may act on the membrane to optimize the function of some of the respiratory chains. ViaA stimulates the ATPase activity of RavA. The protein is Regulatory protein ViaA of Escherichia coli (strain 55989 / EAEC).